The primary structure comprises 131 residues: Meiotically up-regulated gene 115 protein (131 aa).

Its subcellular location is the mitochondrion. It is found in the nucleus. Its function is as follows. Has a role in meiosis. The protein is Meiotically up-regulated gene 115 protein (mug115) of Schizosaccharomyces pombe (strain 972 / ATCC 24843) (Fission yeast).